The sequence spans 141 residues: uncharacterized protein (141 aa).

Positions 1–39 (MNNNNNNNNNNNNNNNNNNNNNNNNNSYDSNHSSSSYTS) are enriched in low complexity. Positions 1–48 (MNNNNNNNNNNNNNNNNNNNNNNNNNSYDSNHSSSSYTSENQNREQQF) are disordered. Residues 109–129 (FFCKIILVFICLVAIYSLVVI) form a helical membrane-spanning segment.

It localises to the membrane. This is an uncharacterized protein from Dictyostelium discoideum (Social amoeba).